Here is a 305-residue protein sequence, read N- to C-terminus: Coenzyme PQQ synthesis protein B (305 aa).

The protein belongs to the PqqB family.

The protein operates within cofactor biosynthesis; pyrroloquinoline quinone biosynthesis. In terms of biological role, may be involved in the transport of PQQ or its precursor to the periplasm. The polypeptide is Coenzyme PQQ synthesis protein B (Methylobacillus flagellatus).